The following is a 509-amino-acid chain: Cytochrome P450 monooxygenase LUC2 (509 aa).

Residues 30-50 (TKVLVTFLTIVIIAPRVFTVI) form a helical membrane-spanning segment. Residue Cys-456 participates in heme binding.

This sequence belongs to the cytochrome P450 family. The cofactor is heme.

The protein localises to the membrane. It functions in the pathway mycotoxin biosynthesis. Its function is as follows. Cytochrome P450 monooxygenase; part of the gene cluster that mediates the biosynthesis of the mycotoxin lucilactaene and the lucilactaene-related compound NG-391 that act as cell cycle inhibitors with potent growth inhibitory activity against malarial parasites, moderate growth inhibitory activity against cancer cells, and no activity against bacteria and fungi. Within the pathway, LUC2 performs C-20 methyl group hydroxylation of several intermediates. LUC2 does not perform the full oxidation of the C-20 methyl group into carboxylic acid, which is a prerequisite for the final methylation step. The pathway begins with the hybrid PKS-NRPS synthetase LUC5 which is responsible for the condensation of one acetyl-coenzyme A (CoA) unit with six malonyl-CoA units and the amide linkage of the arising heptaketide and homoserine, subsequently releasing the first intermediate prelucilactaene B. Both the cytochrome P450 monooxygenase LUC2 and the hydrolase LUC6 function in parallel in modification of prelucilactaene B. LUC6 may catalyze the 2-pyrrolidone ring formation to form prelucilactaene C from prelucilactaene B, followed by C-15 hydroxylation by the same enzyme to give prelucilactaene D, which is then converted to prelucilactaene E by epoxidation, and finally to prelucilactaene F by cyclization. Prelucilactane D, prelucilactaene E, and prelucilactaene F can be converted to dihydrolucilactaene, NG391, and lucilactaene, respectively, via C-20 methyl group hydroxylation by the cytochrome P450 monooxygenase LUC2. However, LUC2, unlike FUS8 in fusarin C biosynthesis, is not enough for the full oxidation of the C-20 methyl group into carboxylic acid, which is a prerequisite for the final methylation step. The aldehyde dehydrogenase LUC3 is involved in the biosynthesis by further oxidation of the C-20 alcoholic analog prelucilactaene G into a carboxylic derivative. This unidentified carboxylic derivative may be converted to demethyllucilactaene. As the last step, the methyltransferase LUC1 methylates the hydroxyl group at C-21 of demethyllucilactaene to generate lucilactaene. This Fusarium sp protein is Cytochrome P450 monooxygenase LUC2.